Here is a 407-residue protein sequence, read N- to C-terminus: Aminoacylase-1 (407 aa).

Ala-2 is subject to N-acetylalanine. Position 80 (His-80) interacts with Zn(2+). The active site involves Asp-82. Asp-113 lines the Zn(2+) pocket. Glu-147 (proton acceptor) is an active-site residue. Glu-148, Glu-175, and His-372 together coordinate Zn(2+).

Belongs to the peptidase M20A family. In terms of assembly, homodimer. Interacts with SPHK1. The cofactor is Zn(2+).

Its subcellular location is the cytoplasm. The catalysed reaction is an N-acyl-L-amino acid + H2O = an L-alpha-amino acid + a carboxylate. It carries out the reaction N-acetyl-L-methionine + H2O = L-methionine + acetate. It catalyses the reaction N-acetyl-L-glutamine + H2O = L-glutamine + acetate. Its function is as follows. Catalyzes the hydrolysis of N-acetylated amino acids to acetate and free amino acids. This Sus scrofa (Pig) protein is Aminoacylase-1 (ACY1).